The following is a 140-amino-acid chain: UPF0102 protein ACIAD1132 (140 aa).

This sequence belongs to the UPF0102 family.

In Acinetobacter baylyi (strain ATCC 33305 / BD413 / ADP1), this protein is UPF0102 protein ACIAD1132.